Here is a 754-residue protein sequence, read N- to C-terminus: Protein transport protein DSL1 (754 aa).

The interval 1-200 (MESLFPNKGE…QVRAKLNTIM (200 aa)) is interaction with TIP20. An interaction with RET1 region spans residues 406–440 (AVSKDDDWNWEVEDDDADAWGDEIDVNIDDEEEKT). The interaction with RET2 stretch occupies residues 406–459 (AVSKDDDWNWEVEDDDADAWGDEIDVNIDDEEEKTNQEKEKEPEEEENAWDEAW). Positions 425–438 (WGDEIDVNIDDEEE) are enriched in acidic residues. The tract at residues 425–454 (WGDEIDVNIDDEEEKTNQEKEKEPEEEENA) is disordered.

Component of a peripheral membrane protein complex consisting of DSL1, SEC39/DSL3 and TIP20. Bound to a SNARE complex consisting of UFE1, USE1, SEC20 and SEC22 or YKT6 through direct interaction of TIP20 with SEC20. Binds the coatomer complex through direct interaction with RET2/COPD and RET1/COPA. Binds TIP20 and SEC39/DSL3.

Its subcellular location is the endoplasmic reticulum membrane. Required for protein transport between the Golgi and the endoplasmic reticulum. May tether coatomer-coated retrograde transport vesicles to the ER membrane through interaction with coatomer as well as the SNARE complex. May contribute to the stabilization of the SNARE complex. This Saccharomyces cerevisiae (strain ATCC 204508 / S288c) (Baker's yeast) protein is Protein transport protein DSL1 (DSL1).